The following is an 865-amino-acid chain: Alanine--tRNA ligase (865 aa).

Zn(2+)-binding residues include His-554, His-558, Cys-656, and His-660.

Belongs to the class-II aminoacyl-tRNA synthetase family. The cofactor is Zn(2+).

The protein resides in the cytoplasm. It catalyses the reaction tRNA(Ala) + L-alanine + ATP = L-alanyl-tRNA(Ala) + AMP + diphosphate. Catalyzes the attachment of alanine to tRNA(Ala) in a two-step reaction: alanine is first activated by ATP to form Ala-AMP and then transferred to the acceptor end of tRNA(Ala). Also edits incorrectly charged Ser-tRNA(Ala) and Gly-tRNA(Ala) via its editing domain. The polypeptide is Alanine--tRNA ligase (Francisella tularensis subsp. novicida (strain U112)).